The primary structure comprises 627 residues: ATP-dependent zinc metalloprotease FtsH 2 (627 aa).

Topologically, residues 1–7 are cytoplasmic; the sequence is MKFSWRT. A helical transmembrane segment spans residues 8 to 28; the sequence is ALLWSLPLLVVGFFFWQGSFG. Residues 29 to 117 are Lumenal-facing; sequence GADANLGSNT…SHPVRNNGMV (89 aa). Residues 118 to 138 traverse the membrane as a helical segment; that stretch reads WGFVGNLIFPVLLIASLFFLF. The Cytoplasmic segment spans residues 139–627; that stretch reads RRSSNMPGGP…PVKEQLIPQL (489 aa). An ATP-binding site is contributed by 212-219; sequence GPPGTGKT. A Zn(2+)-binding site is contributed by His-433. The active site involves Glu-434. The Zn(2+) site is built by His-437 and Asp-511.

The protein in the central section; belongs to the AAA ATPase family. In the C-terminal section; belongs to the peptidase M41 family. Homohexamer (Potential). Part of a large (&gt;500 kDa) complex that includes FtsH3 and PSII. Coimmunoprecipitates with YidC. Zn(2+) serves as cofactor.

It is found in the cellular thylakoid membrane. Functionally, acts as a processive, ATP-dependent zinc metallopeptidase for both cytoplasmic and membrane proteins. Plays a role in the quality control of integral membrane proteins. Its function is as follows. Plays a role in the selective replacement of photosystem II (PSII) protein D1 in the PSII repair cycle following visible-light and UV-B induced damage. If damaged D1 is not removed then new D1 cannot be inserted to restore the PSII reaction center. Seems to also degrade damaged and/or unassembled PSII proteins D2 and PsbB (CP47). May recognize D1 via its first 20 amino acids, as deletion of these prevents the PSII repair cycle. Also seems to degrade cytoplasmic GGPS, glucosylglycerol-phosphate synthase. This Synechocystis sp. (strain ATCC 27184 / PCC 6803 / Kazusa) protein is ATP-dependent zinc metalloprotease FtsH 2 (ftsH2).